The chain runs to 255 residues: Adenosylcobinamide-GDP ribazoletransferase (255 aa).

The next 7 membrane-spanning stretches (helical) occupy residues 33-53, 57-77, 107-127, 136-156, 174-194, 196-216, and 234-254; these read IFLP…IELF, FPGF…SGAL, VGSM…GSYA, FTVL…IYSF, AGLI…AAFF, FSLI…FVVA, and IMEL…NIGV.

It belongs to the CobS family. Mg(2+) is required as a cofactor.

The protein resides in the cell membrane. The enzyme catalyses alpha-ribazole + adenosylcob(III)inamide-GDP = adenosylcob(III)alamin + GMP + H(+). It carries out the reaction alpha-ribazole 5'-phosphate + adenosylcob(III)inamide-GDP = adenosylcob(III)alamin 5'-phosphate + GMP + H(+). Its pathway is cofactor biosynthesis; adenosylcobalamin biosynthesis; adenosylcobalamin from cob(II)yrinate a,c-diamide: step 7/7. Functionally, joins adenosylcobinamide-GDP and alpha-ribazole to generate adenosylcobalamin (Ado-cobalamin). Also synthesizes adenosylcobalamin 5'-phosphate from adenosylcobinamide-GDP and alpha-ribazole 5'-phosphate. In Carboxydothermus hydrogenoformans (strain ATCC BAA-161 / DSM 6008 / Z-2901), this protein is Adenosylcobinamide-GDP ribazoletransferase.